Here is a 268-residue protein sequence, read N- to C-terminus: uncharacterized protein (268 aa).

The disordered stretch occupies residues 45 to 64; the sequence is SDTQGPAPGINGQGKPSPGA.

This is an uncharacterized protein from Aquifex aeolicus (strain VF5).